The following is a 215-amino-acid chain: Protein GET1 (215 aa).

The Lumenal segment spans residues 1-4 (MINL). A helical transmembrane segment spans residues 5 to 24 (ALVIFLCTLLNQIVSWVGKS). Residues 25–108 (VLQEIAFTAY…SFSKKFSTLL (84 aa)) are Cytoplasmic-facing. Residues 73 to 94 (AKLRRKLDKGLADLEKTNNTLS) are a coiled coil. Residues 109-129 (WLMTTGAQFLLSWWFRKQPIF) form a helical membrane-spanning segment. Over 130 to 153 (WLPEGWVPYPVAWLLSFPSAPIGS) the chain is Lumenal. Residues 154 to 170 (VSSGAWGAICRRVLSTL) traverse the membrane as a helical segment. At 171–215 (QEIIQSVLAPSPAATGPVPTGPSSAKNDQPEAKIEALALEHEKLD) the chain is on the cytoplasmic side. Positions 181 to 202 (SPAATGPVPTGPSSAKNDQPEA) are disordered.

Belongs to the WRB/GET1 family. As to quaternary structure, interacts with GET3.

It is found in the endoplasmic reticulum membrane. In terms of biological role, required for the post-translational delivery of tail-anchored (TA) proteins to the endoplasmic reticulum. Acts as a membrane receptor for soluble GET3, which recognizes and selectively binds the transmembrane domain of TA proteins in the cytosol. This is Protein GET1 from Cryptococcus neoformans var. neoformans serotype D (strain B-3501A) (Filobasidiella neoformans).